Consider the following 292-residue polypeptide: Troponin I (292 aa).

Ser1 carries the post-translational modification N-acetylserine. Residues 1–149 (SSLEERRAAR…GLGGLSPEKK (149 aa)) are disordered. The segment covering 46-55 (YSAPAEPAYD) has biased composition (low complexity). Residues 58-134 (AENRRRQQQE…EARRMAEEQK (77 aa)) show a composition bias toward basic and acidic residues. The interval 237-250 (DTKGKFVKPVLRKV) is actin-binding. Positions 255–292 (SKLDKIQRKEAKKSDFRDNLKSSREHEADKEGGEGENE) are disordered.

The protein belongs to the troponin I family.

Troponin I is the inhibitory subunit of troponin, the thin filament regulatory complex which confers calcium-sensitivity to striated muscle actomyosin ATPase activity. The sequence is that of Troponin I from Chlamys nipponensis akazara (Akazara scallop).